Reading from the N-terminus, the 190-residue chain is FMN reductase (NADH) RutF (190 aa).

Belongs to the non-flavoprotein flavin reductase family. RutF subfamily.

The catalysed reaction is FMNH2 + NAD(+) = FMN + NADH + 2 H(+). In terms of biological role, catalyzes the reduction of FMN to FMNH2 which is used to reduce pyrimidine by RutA via the Rut pathway. The chain is FMN reductase (NADH) RutF from Pantoea ananatis (strain LMG 20103).